A 140-amino-acid chain; its full sequence is Large ribosomal subunit protein uL11 (140 aa).

This sequence belongs to the universal ribosomal protein uL11 family. As to quaternary structure, part of the ribosomal stalk of the 50S ribosomal subunit. Interacts with L10 and the large rRNA to form the base of the stalk. L10 forms an elongated spine to which L12 dimers bind in a sequential fashion forming a multimeric L10(L12)X complex. In terms of processing, one or more lysine residues are methylated.

Forms part of the ribosomal stalk which helps the ribosome interact with GTP-bound translation factors. In Desulfatibacillum aliphaticivorans, this protein is Large ribosomal subunit protein uL11.